The sequence spans 357 residues: Protein pelota homolog (357 aa).

The protein belongs to the eukaryotic release factor 1 family. Pelota subfamily. As to quaternary structure, monomer. Requires a divalent metal cation as cofactor.

Its subcellular location is the cytoplasm. In terms of biological role, may function in recognizing stalled ribosomes, interact with stem-loop structures in stalled mRNA molecules, and effect endonucleolytic cleavage of the mRNA. May play a role in the release non-functional ribosomes and degradation of damaged mRNAs. Has endoribonuclease activity. The protein is Protein pelota homolog of Thermococcus onnurineus (strain NA1).